The chain runs to 218 residues: MAKKSVSVIAAKTAVHAAVLAPIALLGWQFWQVWQQGSDALGADPVAEIEHRTGLWALRLLLITLAITPLRQLTGQAVLIRFRRMLGLYAFFYASVHLTAYLWLDLRGFWTQIFEEIVKRPYITVGFTAWLLLVPLAITSTQGWMRRLKRNWGRLHMLIYPIGLLAVLHFWWLVKSDIREPALYAGILALLLGWRVWKRLSARRTTARHSAPPPATPR.

The next 5 membrane-spanning stretches (helical) occupy residues 14–34 (AVHA…WQVW), 60–80 (LLLI…AVLI), 86–106 (LGLY…WLDL), 121–141 (PYIT…ITST), and 155–175 (LHML…WLVK).

This sequence belongs to the MsrQ family. In terms of assembly, heterodimer of a catalytic subunit (MsrP) and a heme-binding subunit (MsrQ). Requires FMN as cofactor. It depends on heme b as a cofactor.

The protein localises to the cell inner membrane. In terms of biological role, part of the MsrPQ system that repairs oxidized periplasmic proteins containing methionine sulfoxide residues (Met-O), using respiratory chain electrons. Thus protects these proteins from oxidative-stress damage caused by reactive species of oxygen and chlorine generated by the host defense mechanisms. MsrPQ is essential for the maintenance of envelope integrity under bleach stress, rescuing a wide series of structurally unrelated periplasmic proteins from methionine oxidation. MsrQ provides electrons for reduction to the reductase catalytic subunit MsrP, using the quinone pool of the respiratory chain. The protein is Protein-methionine-sulfoxide reductase heme-binding subunit MsrQ of Xanthomonas campestris pv. campestris (strain 8004).